A 513-amino-acid chain; its full sequence is Histone acetyltransferase KAT5 (513 aa).

Residues 8 to 65 enclose the Tudor-knot domain; the sequence is IEGCRLPVLRRNQDNEDEWPLAEILSVKDISGRKLFYVHYIDFNKRLDEWVTHERLDL. N6-acetyllysine is present on Lys-52. A disordered region spans residues 69–106; that stretch reads QFPKKEAKTPTKNGLPGSRPGSPEREVPASAQASGKTL. A Phosphoserine; by GSK3 modification is found at Ser-86. The residue at position 90 (Ser-90) is a Phosphoserine; by CDK1 and CDK9. N6-acetyllysine; by autocatalysis occurs at positions 104 and 120. The disordered stretch occupies residues 122–220; the sequence is REAIPGGEPD…RMTGSLVSDR (99 aa). A compositionally biased stretch (polar residues) spans 133–144; that stretch reads PLSSSSCLQPNH. N6-acetyllysine; by autocatalysis occurs at positions 148, 150, 187, and 189. Phosphoserine is present on Ser-199. Residues 227-504 form the MYST-type HAT domain; sequence TRMKNIECIE…IDSKCLHFTP (278 aa). The segment at 260–285 adopts a C2HC MYST-type zinc-finger fold; sequence LYLCEFCLKYGRSLKCLQRHLTKCDL. Lys-327 bears the N6-acetyllysine; by autocatalysis mark. The interval 368–513 is interaction with ATF2; it reads ACILTLPPYQ…PKDWSKRGKW (146 aa). Residues 370 to 372 and 377 to 383 each bind acetyl-CoA; these read ILT and QRRGYGK. Catalysis depends on Glu-403, which acts as the Proton donor/acceptor. Acetyl-CoA contacts are provided by Ser-407 and Ser-416. Lys-430 is covalently cross-linked (Glycyl lysine isopeptide (Lys-Gly) (interchain with G-Cter in SUMO1); alternate). A Glycyl lysine isopeptide (Lys-Gly) (interchain with G-Cter in SUMO2); alternate cross-link involves residue Lys-430. Residue Lys-451 forms a Glycyl lysine isopeptide (Lys-Gly) (interchain with G-Cter in SUMO1) linkage.

This sequence belongs to the MYST (SAS/MOZ) family. In terms of assembly, component of the NuA4 histone acetyltransferase complex which contains the catalytic subunit KAT5/TIP60 and the subunits EP400, TRRAP/PAF400, BRD8/SMAP, EPC1, DMAP1/DNMAP1, RUVBL1/TIP49, RUVBL2, ING3, actin, ACTL6A/BAF53A, MORF4L1/MRG15, MORF4L2/MRGX, MRGBP, YEATS4/GAS41, VPS72/YL1 and MEAF6. KAT5/TIP60, EPC1, and ING3 together constitute a minimal HAT complex termed Piccolo NuA4. The NuA4 complex interacts with MYC. Interacts with ATM. Interacts with JADE1. Interacts with PLA2G4A/CPLA2, EDNRA and HDAC7. Interacts with the cytoplasmic tail of APP and APBB1/FE65. Interacts with TRIM24 and TRIM68. Forms a complex with SENP6 and UBE2I in response to UV irradiation. Identified in a complex with HINT1. Interacts with ATF2 and CUL3. Interacts with NR1D2 (via N-terminus). Component of a SWR1-like complex. Interacts with FOXP3. Interacts with ZBTB49. Interacts with SRF. Interacts with ATF3; promoting autoacetylation and deubiquitination by USP7. Interacts with EP300/p300; interaction promotes KAT5 autoacetylation. Interacts with PRKDC; interaction is impaired following KAT5 sumoylation. Interacts with GPR50. Interacts with NME3; this interaction enables recruitment of NME3 at DNA damage sites where it plays a role in the repair of DNA. (Microbial infection) Interacts with HIV-1 TAT. Phosphorylated on Ser-86 and Ser-90; enhanced during G2/M phase. The phosphorylated form has a higher activity. Phosphorylation at Ser-90 by CDK1 or CDK9 is a prerequisite for phosphorylation at Ser-86 by GSK3. Phosphorylation at Ser-86 by GSK3 (GSK3A or GSK3B) activates acetyltransferase and acyltransferase activities. Phosphorylation at Ser-90 by CDK9 promotes KAT5 recruitment to chromatin. Phosphorylation by VRK1 following DNA damage promotes KAT5 association with chromatin and histone acetyltransferase activity. In terms of processing, autoacetylated. Autoacetylation is required for histone acetyltransferase activity. Autoacetylation at Lys-327 is facilitated by interaction with EP300/p300: it prevents ubiquitination and subsequent degradation by the proteasome and promotes acetylation of target proteins. Deacetylated by HDAC3 and SIRT1. Deacetylation by HDAC3 promotes its ubiquitination and cytoplasmic localization. Post-translationally, sumoylated by UBE2I at Lys-430 and Lys-451, leading to increase of its histone acetyltransferase activity in UV-induced DNA damage response, as well as its translocation to nuclear bodies. Sumoylation with SUMO2 by PIAS4 at Lys-430 promotes repair of DNA double-strand breaks (DSBs) via homologous recombination (HR). Sumoylation by PIAS4 impairs interaction with PRKDC, inhibiting non-homologous end joining (NHEJ)-mediated repair of DSBs, thereby facilitating HR. Desumoylated by SENP3. Ubiquitinated by MDM2, leading to its proteasome-dependent degradation. Ubiquitination is prevented by autoacetylation at Lys-327. Ubiquitinated following deacetylation by HDAC3, leading to cytoplasmic localization. Deubiquitinated by USP7 following interaction with ATF3, promoting its stabilization. In terms of processing, (Microbial infection) In case of HIV-1 infection, interaction with the viral Tat protein leads to KAT5 polyubiquitination and targets it to degradation.

Its subcellular location is the nucleus. The protein localises to the chromosome. It localises to the cytoplasm. It is found in the centromere. The protein resides in the kinetochore. Its subcellular location is the cytoskeleton. The protein localises to the spindle pole. It localises to the nucleolus. It is found in the perinuclear region. It catalyses the reaction L-lysyl-[histone] + acetyl-CoA = N(6)-acetyl-L-lysyl-[histone] + CoA + H(+). The catalysed reaction is L-lysyl-[protein] + acetyl-CoA = N(6)-acetyl-L-lysyl-[protein] + CoA + H(+). It carries out the reaction (2E)-butenoyl-CoA + L-lysyl-[protein] = N(6)-(2E)-butenoyl-L-lysyl-[protein] + CoA + H(+). The enzyme catalyses 2-hydroxyisobutanoyl-CoA + L-lysyl-[protein] = N(6)-(2-hydroxyisobutanoyl)-L-lysyl-[protein] + CoA + H(+). It catalyses the reaction (S)-lactoyl-CoA + L-lysyl-[protein] = N(6)-[(S)-lactoyl]-L-lysyl-[protein] + CoA + H(+). Acyltransferase and acetyltransferase activities are activated by phosphorylation and autoacetylation. Autoacetylation activates the histone acetyltransferase activity. Catalytic subunit of the NuA4 histone acetyltransferase complex, a multiprotein complex involved in transcriptional activation of select genes principally by acetylation of nucleosomal histones H2A and H4. Histone acetylation alters nucleosome-DNA interactions and promotes interaction of the modified histones with other proteins which positively regulate transcription. The NuA4 histone acetyltransferase complex is required for the activation of transcriptional programs associated with proto-oncogene mediated growth induction, tumor suppressor mediated growth arrest and replicative senescence, apoptosis, and DNA repair. The NuA4 complex plays a direct role in repair of DNA double-strand breaks (DSBs) by promoting homologous recombination (HR): the complex inhibits TP53BP1 binding to chromatin via MBTD1, which recognizes and binds histone H4 trimethylated at 'Lys-20' (H4K20me), and KAT5 that catalyzes acetylation of 'Lys-15' of histone H2A (H2AK15ac), thereby blocking the ubiquitination mark required for TP53BP1 localization at DNA breaks. Also involved in DSB repair by mediating acetylation of 'Lys-5' of histone H2AX (H2AXK5ac), promoting NBN/NBS1 assembly at the sites of DNA damage. The NuA4 complex plays a key role in hematopoietic stem cell maintenance and is required to maintain acetylated H2A.Z/H2AZ1 at MYC target genes. The NuA4 complex is also required for spermatid development by promoting acetylation of histones: histone hyperacetylation is required for histone replacement during the transition from round to elongating spermatids. Component of a SWR1-like complex that specifically mediates the removal of histone H2A.Z/H2AZ1 from the nucleosome. Also acetylates non-histone proteins, such as BMAL1, ATM, AURKB, CHKA, CGAS, ERCC4/XPF, LPIN1, TP53/p53, NDC80/HEC1, NR1D2, RAN, SOX4, FOXP3, SQSTM1, ULK1 and RUBCNL/Pacer. Directly acetylates and activates ATM. Promotes nucleotide excision repair (NER) by mediating acetylation of ERCC4/XPF, thereby promoting formation of the ERCC4-ERCC1 complex. Relieves NR1D2-mediated inhibition of APOC3 expression by acetylating NR1D2. Acts as a regulator of regulatory T-cells (Treg) by catalyzing FOXP3 acetylation, thereby promoting FOXP3 transcriptional repressor activity. Involved in skeletal myoblast differentiation by mediating acetylation of SOX4. Catalyzes acetylation of APBB1/FE65, increasing its transcription activator activity. Promotes transcription elongation during the activation phase of the circadian cycle by catalyzing acetylation of BMAL1, promoting elongation of circadian transcripts. Together with GSK3 (GSK3A or GSK3B), acts as a regulator of autophagy: phosphorylated at Ser-86 by GSK3 under starvation conditions, leading to activate acetyltransferase activity and promote acetylation of key autophagy regulators, such as ULK1 and RUBCNL/Pacer. Acts as a regulator of the cGAS-STING innate antiviral response by catalyzing acetylation the N-terminus of CGAS, thereby promoting CGAS DNA-binding and activation. Also regulates lipid metabolism by mediating acetylation of CHKA or LPIN1. Promotes lipolysis of lipid droplets following glucose deprivation by mediating acetylation of isoform 1 of CHKA, thereby promoting monomerization of CHKA and its conversion into a tyrosine-protein kinase. Acts as a regulator of fatty-acid-induced triacylglycerol synthesis by catalyzing acetylation of LPIN1, thereby promoting the synthesis of diacylglycerol. In addition to protein acetyltransferase, can use different acyl-CoA substrates, such as (2E)-butenoyl-CoA (crotonyl-CoA), S-lactoyl-CoA (lactyl-CoA) and 2-hydroxyisobutanoyl-CoA (2-hydroxyisobutyryl-CoA), and is able to mediate protein crotonylation, lactylation and 2-hydroxyisobutyrylation, respectively. Acts as a key regulator of chromosome segregation and kinetochore-microtubule attachment during mitosis by mediating acetylation or crotonylation of target proteins. Catalyzes acetylation of AURKB at kinetochores, increasing AURKB activity and promoting accurate chromosome segregation in mitosis. Acetylates RAN during mitosis, promoting microtubule assembly at mitotic chromosomes. Acetylates NDC80/HEC1 during mitosis, promoting robust kinetochore-microtubule attachment. Catalyzes crotonylation of MAPRE1/EB1, thereby ensuring accurate spindle positioning in mitosis. Catalyzes lactylation of NBN/NBS1 in response to DNA damage, thereby promoting DNA double-strand breaks (DSBs) via homologous recombination (HR). In terms of biological role, (Microbial infection) Catalyzes the acetylation of flavivirus NS3 protein to modulate their RNA-binding and -unwinding activities leading to facilitate viral replication. The chain is Histone acetyltransferase KAT5 from Homo sapiens (Human).